Here is a 409-residue protein sequence, read N- to C-terminus: MQIYKVGGAVRDRLLGQPVTDIDWVVVGASTEDMLVKGYRPVGTDFPVFLHPLTNEEYALARTERKSGVGYGGFVFHASPEVTLEQDLIRRDLTINAMAEDKDGNLTDPYNGQKDLEARILRHVSPAFAEDPLRVLRVARFAARYARYGFTIAPETLGLMRQLSESGELKALTAERSWKEISRALMEEQPQVFIQVLHDCGALKELMPEVEALFGVPQPAAHHPEIDTGVHVLSVLEQSAIHKHPLTVRWACLLHDLGKGLTPEAEWPRHIAHEHTGLRLIKAVNERFRVPRECQELALLVGQYHTHGHRALELKPSTLLELLQSFDVYRRPQRFEEFIAACEMDARGRHGFEQRSYPQADYLRGAAQAARTVSVQPLLEKGFKGKELGDALKNERLKALKIYKAEHVA.

ATP-binding residues include glycine 8 and arginine 11. The CTP site is built by glycine 8 and arginine 11. Mg(2+)-binding residues include aspartate 21 and aspartate 23. ATP is bound by residues arginine 91, arginine 137, and arginine 140. The CTP site is built by arginine 91, arginine 137, and arginine 140. In terms of domain architecture, HD spans 228–329 (TGVHVLSVLE…LELLQSFDVY (102 aa)).

This sequence belongs to the tRNA nucleotidyltransferase/poly(A) polymerase family. Bacterial CCA-adding enzyme type 1 subfamily. As to quaternary structure, monomer. Can also form homodimers and oligomers. Mg(2+) serves as cofactor. Requires Ni(2+) as cofactor.

The catalysed reaction is a tRNA precursor + 2 CTP + ATP = a tRNA with a 3' CCA end + 3 diphosphate. The enzyme catalyses a tRNA with a 3' CCA end + 2 CTP + ATP = a tRNA with a 3' CCACCA end + 3 diphosphate. Its function is as follows. Catalyzes the addition and repair of the essential 3'-terminal CCA sequence in tRNAs without using a nucleic acid template. Adds these three nucleotides in the order of C, C, and A to the tRNA nucleotide-73, using CTP and ATP as substrates and producing inorganic pyrophosphate. tRNA 3'-terminal CCA addition is required both for tRNA processing and repair. Also involved in tRNA surveillance by mediating tandem CCA addition to generate a CCACCA at the 3' terminus of unstable tRNAs. While stable tRNAs receive only 3'-terminal CCA, unstable tRNAs are marked with CCACCA and rapidly degraded. The polypeptide is Multifunctional CCA protein (Pseudomonas savastanoi pv. phaseolicola (strain 1448A / Race 6) (Pseudomonas syringae pv. phaseolicola (strain 1448A / Race 6))).